The sequence spans 31 residues: Cytochrome b6-f complex subunit 6 (31 aa).

The helical transmembrane segment at I4–G24 threads the bilayer.

The protein belongs to the PetL family. As to quaternary structure, the 4 large subunits of the cytochrome b6-f complex are cytochrome b6, subunit IV (17 kDa polypeptide, PetD), cytochrome f and the Rieske protein, while the 4 small subunits are PetG, PetL, PetM and PetN. The complex functions as a dimer.

The protein resides in the plastid. It is found in the chloroplast thylakoid membrane. Its function is as follows. Component of the cytochrome b6-f complex, which mediates electron transfer between photosystem II (PSII) and photosystem I (PSI), cyclic electron flow around PSI, and state transitions. PetL is important for photoautotrophic growth as well as for electron transfer efficiency and stability of the cytochrome b6-f complex. The chain is Cytochrome b6-f complex subunit 6 from Physcomitrium patens (Spreading-leaved earth moss).